The following is a 159-amino-acid chain: Cytochrome c-type biogenesis protein CcmE (159 aa).

Residues 1-7 (MTPRQRR) are Cytoplasmic-facing. A helical; Signal-anchor for type II membrane protein membrane pass occupies residues 8 to 28 (LGMLLAALACAGIALALVLNA). Topologically, residues 29–159 (FRSNLVFFFS…LAEGERETQR (131 aa)) are periplasmic. Heme contacts are provided by His-123 and Tyr-127.

Belongs to the CcmE/CycJ family.

The protein localises to the cell inner membrane. Functionally, heme chaperone required for the biogenesis of c-type cytochromes. Transiently binds heme delivered by CcmC and transfers the heme to apo-cytochromes in a process facilitated by CcmF and CcmH. This is Cytochrome c-type biogenesis protein CcmE from Cupriavidus pinatubonensis (strain JMP 134 / LMG 1197) (Cupriavidus necator (strain JMP 134)).